Reading from the N-terminus, the 342-residue chain is Nicotinate-nucleotide--dimethylbenzimidazole phosphoribosyltransferase (342 aa).

The Proton acceptor role is filled by glutamate 311.

It belongs to the CobT family.

The enzyme catalyses 5,6-dimethylbenzimidazole + nicotinate beta-D-ribonucleotide = alpha-ribazole 5'-phosphate + nicotinate + H(+). The protein operates within nucleoside biosynthesis; alpha-ribazole biosynthesis; alpha-ribazole from 5,6-dimethylbenzimidazole: step 1/2. Functionally, catalyzes the synthesis of alpha-ribazole-5'-phosphate from nicotinate mononucleotide (NAMN) and 5,6-dimethylbenzimidazole (DMB). The chain is Nicotinate-nucleotide--dimethylbenzimidazole phosphoribosyltransferase from Shewanella loihica (strain ATCC BAA-1088 / PV-4).